The chain runs to 291 residues: Aspartate carbamoyltransferase catalytic subunit (291 aa).

Carbamoyl phosphate is bound by residues arginine 47 and threonine 48. L-aspartate is bound at residue lysine 75. Carbamoyl phosphate contacts are provided by arginine 97, histidine 126, and glutamine 129. L-aspartate contacts are provided by arginine 159 and arginine 213. Carbamoyl phosphate is bound by residues glycine 251 and proline 252.

It belongs to the aspartate/ornithine carbamoyltransferase superfamily. ATCase family. As to quaternary structure, heterododecamer (2C3:3R2) of six catalytic PyrB chains organized as two trimers (C3), and six regulatory PyrI chains organized as three dimers (R2).

It carries out the reaction carbamoyl phosphate + L-aspartate = N-carbamoyl-L-aspartate + phosphate + H(+). The protein operates within pyrimidine metabolism; UMP biosynthesis via de novo pathway; (S)-dihydroorotate from bicarbonate: step 2/3. Its function is as follows. Catalyzes the condensation of carbamoyl phosphate and aspartate to form carbamoyl aspartate and inorganic phosphate, the committed step in the de novo pyrimidine nucleotide biosynthesis pathway. The polypeptide is Aspartate carbamoyltransferase catalytic subunit (Aquifex aeolicus (strain VF5)).